The following is a 199-amino-acid chain: Thymidine kinase (199 aa).

ATP is bound by residues 23–30 (GSMFSGKT) and 95–98 (DEAQ). Glu-96 serves as the catalytic Proton acceptor. Zn(2+)-binding residues include Cys-152, Cys-155, Cys-184, and Cys-187.

It belongs to the thymidine kinase family. In terms of assembly, homotetramer.

It is found in the cytoplasm. It carries out the reaction thymidine + ATP = dTMP + ADP + H(+). The sequence is that of Thymidine kinase from Bacteroides fragilis (strain ATCC 25285 / DSM 2151 / CCUG 4856 / JCM 11019 / LMG 10263 / NCTC 9343 / Onslow / VPI 2553 / EN-2).